The chain runs to 427 residues: Large ribosomal subunit protein uL4 (427 aa).

N-acetylalanine is present on Ala-2. The residue at position 14 (Lys-14) is an N6-acetyllysine. Omega-N-methylarginine is present on Arg-97. N6-acetyllysine is present on Lys-106. Residue Lys-239 forms a Glycyl lysine isopeptide (Lys-Gly) (interchain with G-Cter in SUMO2) linkage. Position 259 is an N6-acetyllysine (Lys-259). Phosphothreonine is present on Thr-266. Phosphoserine occurs at positions 290 and 295. The residue at position 300 (Arg-300) is a Citrulline. Residue Lys-327 forms a Glycyl lysine isopeptide (Lys-Gly) (interchain with G-Cter in SUMO2) linkage. An N6-acetyllysine mark is found at Lys-333 and Lys-353. Lys-364 carries the post-translational modification N6-acetyllysine; alternate. A Glycyl lysine isopeptide (Lys-Gly) (interchain with G-Cter in SUMO1); alternate cross-link involves residue Lys-364. Residue Ser-365 is modified to Phosphoserine. The segment at 369-427 is disordered; sequence AAVAGKKPVVGKKGKKAAVGVKKQKKPLVGKKAAATKKPAPEKKPAEKKPTTEEKKPAA. Residues 377–397 are compositionally biased toward basic residues; the sequence is VVGKKGKKAAVGVKKQKKPLV. Residues 407–427 are compositionally biased toward basic and acidic residues; it reads PAPEKKPAEKKPTTEEKKPAA.

It belongs to the universal ribosomal protein uL4 family. In terms of assembly, component of the large ribosomal subunit. May bind IPO9 with low affinity. Interacts with RBM3. Post-translationally, citrullinated by PADI4.

The protein resides in the cytoplasm. Its function is as follows. Component of the large ribosomal subunit. The ribosome is a large ribonucleoprotein complex responsible for the synthesis of proteins in the cell. This Pongo abelii (Sumatran orangutan) protein is Large ribosomal subunit protein uL4 (RPL4).